Reading from the N-terminus, the 141-residue chain is Nucleoside diphosphate kinase (141 aa).

6 residues coordinate ATP: Lys-11, Phe-59, Arg-87, Thr-93, Arg-104, and Asn-114. The active-site Pros-phosphohistidine intermediate is His-117.

The protein belongs to the NDK family. In terms of assembly, homotetramer. It depends on Mg(2+) as a cofactor.

It localises to the cytoplasm. The catalysed reaction is a 2'-deoxyribonucleoside 5'-diphosphate + ATP = a 2'-deoxyribonucleoside 5'-triphosphate + ADP. The enzyme catalyses a ribonucleoside 5'-diphosphate + ATP = a ribonucleoside 5'-triphosphate + ADP. Major role in the synthesis of nucleoside triphosphates other than ATP. The ATP gamma phosphate is transferred to the NDP beta phosphate via a ping-pong mechanism, using a phosphorylated active-site intermediate. The protein is Nucleoside diphosphate kinase of Acidovorax sp. (strain JS42).